A 223-amino-acid polypeptide reads, in one-letter code: Phosphoribosylformylglycinamidine synthase subunit PurQ (223 aa).

The 222-residue stretch at 2 to 223 folds into the Glutamine amidotransferase type-1 domain; that stretch reads KFAVLKFPGS…MVNSWREQNV (222 aa). Catalysis depends on cysteine 85, which acts as the Nucleophile. Catalysis depends on residues histidine 193 and glutamate 195.

As to quaternary structure, part of the FGAM synthase complex composed of 1 PurL, 1 PurQ and 2 PurS subunits.

The protein localises to the cytoplasm. The catalysed reaction is N(2)-formyl-N(1)-(5-phospho-beta-D-ribosyl)glycinamide + L-glutamine + ATP + H2O = 2-formamido-N(1)-(5-O-phospho-beta-D-ribosyl)acetamidine + L-glutamate + ADP + phosphate + H(+). The enzyme catalyses L-glutamine + H2O = L-glutamate + NH4(+). The protein operates within purine metabolism; IMP biosynthesis via de novo pathway; 5-amino-1-(5-phospho-D-ribosyl)imidazole from N(2)-formyl-N(1)-(5-phospho-D-ribosyl)glycinamide: step 1/2. In terms of biological role, part of the phosphoribosylformylglycinamidine synthase complex involved in the purines biosynthetic pathway. Catalyzes the ATP-dependent conversion of formylglycinamide ribonucleotide (FGAR) and glutamine to yield formylglycinamidine ribonucleotide (FGAM) and glutamate. The FGAM synthase complex is composed of three subunits. PurQ produces an ammonia molecule by converting glutamine to glutamate. PurL transfers the ammonia molecule to FGAR to form FGAM in an ATP-dependent manner. PurS interacts with PurQ and PurL and is thought to assist in the transfer of the ammonia molecule from PurQ to PurL. The protein is Phosphoribosylformylglycinamidine synthase subunit PurQ of Staphylococcus saprophyticus subsp. saprophyticus (strain ATCC 15305 / DSM 20229 / NCIMB 8711 / NCTC 7292 / S-41).